Reading from the N-terminus, the 368-residue chain is Proteinase-activated receptor 3 (368 aa).

The N-terminal stretch at 1–21 is a signal peptide; it reads MEMKVLILVGVRLLFLPTTVC. A propeptide spans 22–37 (removed for receptor activation); sequence QSGMKHVSDNSALTAE. The Extracellular portion of the chain corresponds to 38-93; the sequence is SFNGNEHSFEEFPLSDIEGWTGATTTIKAKCPEESITTLHVNNATMGYLRSSLSTK. N80 is a glycosylation site (N-linked (GlcNAc...) asparagine). A helical transmembrane segment spans residues 94–114; the sequence is VIPAIYILVFVIGVPANIVTL. Topologically, residues 115–123 are cytoplasmic; that stretch reads WKLSSRTKS. A helical transmembrane segment spans residues 124 to 144; the sequence is ICLVIFHTNLAIADLLFCVTL. The Extracellular segment spans residues 145–166; that stretch reads PFKIAYHLNGNDWVFGEVMCRV. C164 and C243 are oxidised to a cystine. Residues 167 to 187 form a helical membrane-spanning segment; it reads TTVAFYGNMYCAILILTCMGI. At 188–208 the chain is on the cytoplasmic side; sequence NRYLATVHPFTYRKLPKRNFT. Residues 209–229 traverse the membrane as a helical segment; that stretch reads LLMCGVVWVMVVLYMLPLAIL. Residues 230–257 lie on the Extracellular side of the membrane; that stretch reads KQEYHLVQPGITTCHDVHDTCESPLPFQ. A helical membrane pass occupies residues 258 to 278; the sequence is FYYFVSLAFFGFLIPFVVSVF. Residues 279–300 lie on the Cytoplasmic side of the membrane; sequence CYTTLIHKLNAQDRKWLRYIKA. Residues 301–321 form a helical membrane-spanning segment; the sequence is VLLILVIFTICFAPTNIILII. At 322 to 338 the chain is on the extracellular side; it reads HHANYYYSNTDSLYFMY. A helical transmembrane segment spans residues 339 to 359; sequence LIALCLGSLNSCLDPFLYFIM. Residues 360 to 368 lie on the Cytoplasmic side of the membrane; it reads SKIVDQLTS.

Belongs to the G-protein coupled receptor 1 family. In terms of assembly, interacts with INSC/inscuteable and GPSM2. A proteolytic cleavage generates a new N-terminus that functions as a tethered ligand.

It localises to the cell membrane. Functionally, receptor for activated thrombin coupled to G proteins that stimulate phosphoinositide hydrolysis. The chain is Proteinase-activated receptor 3 (F2rl2) from Rattus norvegicus (Rat).